A 190-amino-acid polypeptide reads, in one-letter code: dCTP deaminase (190 aa).

113–118 (KSTYAR) is a dCTP binding site. The Proton donor/acceptor role is filled by Glu-139. Residues Gln-158, Tyr-172, Lys-181, and Gln-182 each contribute to the dCTP site.

This sequence belongs to the dCTP deaminase family. Homotrimer.

It catalyses the reaction dCTP + H2O + H(+) = dUTP + NH4(+). It functions in the pathway pyrimidine metabolism; dUMP biosynthesis; dUMP from dCTP (dUTP route): step 1/2. Catalyzes the deamination of dCTP to dUTP. The chain is dCTP deaminase from Chlamydia muridarum (strain MoPn / Nigg).